The sequence spans 218 residues: Small ribosomal subunit protein uS3c (218 aa).

Residues 47 to 118 (VQKNIRISSG…KLNIAITRIT (72 aa)) form the KH type-2 domain.

Belongs to the universal ribosomal protein uS3 family. Part of the 30S ribosomal subunit.

The protein resides in the plastid. It localises to the chloroplast. This Vitis vinifera (Grape) protein is Small ribosomal subunit protein uS3c (rps3).